A 198-amino-acid chain; its full sequence is Putative glutathione S-transferase alpha-5 (198 aa).

A GST N-terminal domain is found at 2 to 78; it reads TKPTLTYFPV…YISEKHDFRG (77 aa). Glutathione-binding positions include Y8, R42, 49–50, and 62–63; these read QL and QT. The GST C-terminal domain occupies 80 to 198; the sequence is TKEERARAHQ…YLESRPQSNF (119 aa).

This sequence belongs to the GST superfamily. Alpha family.

It carries out the reaction RX + glutathione = an S-substituted glutathione + a halide anion + H(+). Functionally, conjugation of reduced glutathione to a wide number of exogenous and endogenous hydrophobic electrophiles. The polypeptide is Putative glutathione S-transferase alpha-5 (gsta5) (Dictyostelium discoideum (Social amoeba)).